We begin with the raw amino-acid sequence, 943 residues long: UvrABC system protein A (943 aa).

An ATP-binding site is contributed by 31–38; it reads GLSGSGKS. Residues 253 to 280 form a C4-type zinc finger; that stretch reads CPHCGYSVPELEPRLFSFNNPAGACPTC. ABC transporter domains lie at 310–587 and 607–937; these read WDRR…PNSI and LDKK…RFLK. An ATP-binding site is contributed by 640 to 647; it reads GVSGSGKS. A C4-type zinc finger spans residues 740 to 766; sequence CEACQGDGVLKVEMHFLPDVYVPCDQC.

The protein belongs to the ABC transporter superfamily. UvrA family. In terms of assembly, forms a heterotetramer with UvrB during the search for lesions.

It is found in the cytoplasm. The UvrABC repair system catalyzes the recognition and processing of DNA lesions. UvrA is an ATPase and a DNA-binding protein. A damage recognition complex composed of 2 UvrA and 2 UvrB subunits scans DNA for abnormalities. When the presence of a lesion has been verified by UvrB, the UvrA molecules dissociate. The chain is UvrABC system protein A from Haemophilus influenzae (strain ATCC 51907 / DSM 11121 / KW20 / Rd).